A 565-amino-acid chain; its full sequence is Proline--tRNA ligase (565 aa).

This sequence belongs to the class-II aminoacyl-tRNA synthetase family. ProS type 1 subfamily. Homodimer.

The protein localises to the cytoplasm. The enzyme catalyses tRNA(Pro) + L-proline + ATP = L-prolyl-tRNA(Pro) + AMP + diphosphate. Functionally, catalyzes the attachment of proline to tRNA(Pro) in a two-step reaction: proline is first activated by ATP to form Pro-AMP and then transferred to the acceptor end of tRNA(Pro). As ProRS can inadvertently accommodate and process non-cognate amino acids such as alanine and cysteine, to avoid such errors it has two additional distinct editing activities against alanine. One activity is designated as 'pretransfer' editing and involves the tRNA(Pro)-independent hydrolysis of activated Ala-AMP. The other activity is designated 'posttransfer' editing and involves deacylation of mischarged Ala-tRNA(Pro). The misacylated Cys-tRNA(Pro) is not edited by ProRS. This Lactobacillus delbrueckii subsp. bulgaricus (strain ATCC BAA-365 / Lb-18) protein is Proline--tRNA ligase.